Reading from the N-terminus, the 406-residue chain is UPF0754 membrane protein CYA_0973 (406 aa).

2 helical membrane-spanning segments follow: residues 1-21 (MALWIYVVPPLAGLVIGYFTN) and 385-405 (IVNLGGLLGFLVGCVQVLFLL).

It belongs to the UPF0754 family.

Its subcellular location is the cell inner membrane. The sequence is that of UPF0754 membrane protein CYA_0973 from Synechococcus sp. (strain JA-3-3Ab) (Cyanobacteria bacterium Yellowstone A-Prime).